Reading from the N-terminus, the 91-residue chain is Large ribosomal subunit protein eL43 (91 aa).

The C4-type zinc-finger motif lies at 39-60 (CPFCGKDAMRRGAVGIWNCSKC).

Belongs to the eukaryotic ribosomal protein eL43 family.

This Ostertagia ostertagi (Brown stomach worm) protein is Large ribosomal subunit protein eL43 (rpl-37a).